The sequence spans 267 residues: GTP cyclohydrolase FolE2 (267 aa).

It belongs to the GTP cyclohydrolase IV family.

The catalysed reaction is GTP + H2O = 7,8-dihydroneopterin 3'-triphosphate + formate + H(+). The protein operates within cofactor biosynthesis; 7,8-dihydroneopterin triphosphate biosynthesis; 7,8-dihydroneopterin triphosphate from GTP: step 1/1. Its function is as follows. Converts GTP to 7,8-dihydroneopterin triphosphate. This is GTP cyclohydrolase FolE2 from Geobacter sp. (strain M21).